The sequence spans 435 residues: Putative F-box/FBD/LRR-repeat protein At5g56810 (435 aa).

In terms of domain architecture, F-box spans 14–62; that stretch reads PDRISQLPNDLLFRILSLIPVSDAMSTSLLSKRWKSVWKMLPTLVYNEN. 6 LRR repeats span residues 64 to 95, 146 to 173, 174 to 199, 222 to 248, 266 to 291, and 316 to 341; these read CSNIGSLGFDQFCGRSLQLHEAPLLKTLTLEL, LKLQGNICLDVVDSPVCFQSLKSLYLTC, VNFENEESFSKLLSACPVLEDLFLQR, KEQAYYSNDEAILEITAPSLKHLNIFD, SVRVKLSKNEKLPKVLTSVEHLSLDL, and YDNFQSNLLLSLLKDLPNLQSLKLNH. The region spanning 353 to 404 is the FBD domain; sequence CSVSEPSSVPECLSFHLETFQWIGYAGTFEEIAAAVYVLKNARCLKNATISL.

This chain is Putative F-box/FBD/LRR-repeat protein At5g56810, found in Arabidopsis thaliana (Mouse-ear cress).